Here is a 172-residue protein sequence, read N- to C-terminus: uncharacterized protein (172 aa).

The first 21 residues, Met-1–Gly-21, serve as a signal peptide directing secretion. Cys-22 carries N-palmitoyl cysteine lipidation. Residue Cys-22 is the site of S-diacylglycerol cysteine attachment.

It localises to the cell membrane. This is an uncharacterized protein from Escherichia coli O157:H7.